The primary structure comprises 72 residues: Probable movement protein p8 (72 aa).

Residues 16–58 are disordered; sequence GRARSVEGKKHNGSGLTGVKRHAVSETSQKSQQGTGNGTMTNI. Polar residues predominate over residues 40–58; it reads SETSQKSQQGTGNGTMTNI.

The protein belongs to the carmovirus/necrovirus/panicovirus movement protein p8 family.

Its function is as follows. Cell-to-cell movement. The polypeptide is Probable movement protein p8 (Tobacco necrosis virus (strain A) (TNV-A)).